A 776-amino-acid polypeptide reads, in one-letter code: E3 ubiquitin-protein ligase UHRF1 (776 aa).

The 78-residue stretch at 1-78 (MWIQVRTMDG…VQLLVRQAVA (78 aa)) folds into the Ubiquitin-like domain. The segment at 88–126 (AELSDSDSGCGSAQSESDKGSTHGESDVQSAGASGQTDT) is disordered. The span at 93–102 (SDSGCGSAQS) shows a compositional bias: polar residues. Over residues 103–113 (ESDKGSTHGES) the composition is skewed to basic and acidic residues. Over residues 114 to 126 (DVQSAGASGQTDT) the composition is skewed to polar residues. Tudor-like regions lie at residues 135–201 (GFYK…PRAR) and 208–277 (QLEP…IEEP). Residues 278-298 (GSAEGPGASSDSPLKKGSNGP) are disordered. A linker region spans residues 290–299 (PLKKGSNGPE). The segment at 297–364 (GPECKVCKDD…DWYCPDCRND (68 aa)) adopts a PHD-type zinc-finger fold. 2 histone H3R2me0 binding regions span residues 331 to 335 (CDECD) and 351 to 353 (PDD). Residues 417-580 (GPVPGVPVGT…FLVWRYLLKR (164 aa)) form the YDG domain. The required to promote base flipping stretch occupies residues 443-444 (HV). DNA-binding positions include 461–462 (AG) and D467. Required for formation of a 5-methylcytosine-binding pocket stretches follow at residues 464–467 (YEDD) and 476–479 (YTGS). Residues 617–660 (EKEKENKNEDDIEETPTKGKRKRKSQSMEEKSSPTKGTPKKMKV) form a disordered region. Phosphoserine; by CDK2 is present on S649. An RING-type zinc finger spans residues 706-745 (CICCQEVVYQPITTECQHNVCRECLQRSFKAKVYTCPACR).

Post-translationally, phosphorylation at Ser-649 is required for gastrulation. In terms of tissue distribution, expressed in proliferating tissues. Highly expressed 24-48 hours after fertilization (hpf) in rapidly proliferating tissues, including the tectum, retina and brachial arches. Preferentially expressed in the liver bud and expression is maintained in the fully developed liver. Also expressed in the proximal gut. In adult, the highest expression is detected in testis.

The protein localises to the nucleus. The protein resides in the cytoplasm. The catalysed reaction is S-ubiquitinyl-[E2 ubiquitin-conjugating enzyme]-L-cysteine + [acceptor protein]-L-lysine = [E2 ubiquitin-conjugating enzyme]-L-cysteine + N(6)-ubiquitinyl-[acceptor protein]-L-lysine.. The protein operates within protein modification; protein ubiquitination. Functionally, multidomain protein that acts as a key epigenetic regulator by bridging DNA methylation and chromatin modification. Specifically recognizes and binds hemimethylated DNA at replication forks via its YDG domain and recruits dnmt1 methyltransferase to ensure faithful propagation of the DNA methylation patterns through DNA replication. In addition to its role in maintenance of DNA methylation, also plays a key role in chromatin modification: through its tudor-like regions and PHD-type zinc fingers, specifically recognizes and binds histone H3 trimethylated at 'Lys-9' (H3K9me3) and unmethylated at 'Arg-2' (H3R2me0), respectively, and recruits chromatin proteins. Enriched in pericentric heterochromatin where it recruits different chromatin modifiers required for this chromatin replication. Also localizes to euchromatic regions where it negatively regulates transcription possibly by impacting DNA methylation and histone modifications. Has E3 ubiquitin-protein ligase activity by mediating the ubiquitination of target proteins. However, it is still unclear how E3 ubiquitin-protein ligase activity is related to its role in chromatin in vivo. Required for pregastrula and lens development. The chain is E3 ubiquitin-protein ligase UHRF1 (uhrf1) from Danio rerio (Zebrafish).